We begin with the raw amino-acid sequence, 932 residues long: MSEAGGRGCGSPVPQRARWRLVAATAAFCLVSATSVWTAGAEPMSREEKQKLGNQVLEMFDHAYGNYMEHAYPADELMPLTCRGRVRGQEPSRGDVDDALGKFSLTLIDSLDTLVVLNKTKEFEDAVRKVLRDVNLDNDVVVSVFETNIRVLGGLLGGHSLAIMLKEKGEYMQWYNDELLQMAKQLGYKLLPAFNTTSGLPYPRINLKFGIRKPEARTGTETDTCTACAGTLILEFAALSRFTGATIFEEYARKALDFLWEKRQRSSNLVGVTINIHTGDWVRKDSGVGAGIDSYYEYLLKAYVLLGDDSFLERFNTHYDAIMRYISQPPLLLDVHIHKPMLNARTWMDALLAFFPGLQVLKGDIRPAIETHEMLYQVIKKHNFLPEAFTTDFRVHWAQHPLRPEFAESTYFLYKATGDPYYLEVGKTLIENLNKYARVPCGFAAMKDVRTGSHEDRMDSFFLAEMFKYLYLLFADKEDIIFDIEDYIFTTEAHLLPLWLSTTNQSISKKNTTSEYTELDDSNFDWTCPNTQILFPNDPLYAQSIREPLKNVVDKSCPRGIIRVEESFRSGAKPPLRARDFMATNPEHLEILKKMGVSLIHLKDGRVQLVQHAIQAASSIDAEDGLRFMQEMIELSSQQQKEQQLPPRAVQIVSHPFFGRVVLTAGPAQFGLDLSKHKETRGFVASSKPSNGCSELTNPEAVMGKIALIQRGQCMFAEKARNIQNAGAIGGIVIDDNEGSSSDTAPLFQMAGDGKDTDDIKIPMLFLFSKEGSIILDAIREYEEVEVLLSDKAKDRDPEMENEEQPSSENDSQNQSGEQISSSSQEVDLVDQESSEENSLNSHPESLSLADMDNAASISPSEQTSNPTENHETTNLNGECTDLDNQLQEQSETEEDSNPNVSWGKKVQPIDSILADWNEDIEAFEMMEKDEL.

Positions 1–41 (MSEAGGRGCGSPVPQRARWRLVAATAAFCLVSATSVWTAGA) are cleaved as a signal peptide. The N-linked (GlcNAc...) asparagine glycan is linked to N118. E146 (proton donor) is an active-site residue. N195 carries N-linked (GlcNAc...) asparagine glycosylation. D293 is a catalytic residue. E387 (proton donor) is an active-site residue. E405 is a catalytic residue. Position 491 (T491) interacts with Ca(2+). N-linked (GlcNAc...) asparagine glycans are attached at residues N504 and N511. One can recognise a PA domain in the interval 674–779 (LSKHKETRGF…KEGSIILDAI (106 aa)). The span at 790 to 799 (SDKAKDRDPE) shows a compositional bias: basic and acidic residues. The tract at residues 790–908 (SDKAKDRDPE…PNVSWGKKVQ (119 aa)) is disordered. N-linked (GlcNAc...) asparagine glycosylation is found at N810 and N814. Residues 812–825 (SQNQSGEQISSSSQ) show a composition bias toward low complexity. Residues 856-890 (ASISPSEQTSNPTENHETTNLNGECTDLDNQLQEQ) show a composition bias toward polar residues. N-linked (GlcNAc...) asparagine glycosylation occurs at N900. The Prevents secretion from ER motif lies at 929-932 (KDEL).

Belongs to the glycosyl hydrolase 47 family. Ca(2+) is required as a cofactor.

Its subcellular location is the endoplasmic reticulum lumen. The enzyme catalyses N(4)-(alpha-D-Man-(1-&gt;2)-alpha-D-Man-(1-&gt;2)-alpha-D-Man-(1-&gt;3)-[alpha-D-Man-(1-&gt;2)-alpha-D-Man-(1-&gt;3)-[alpha-D-Man-(1-&gt;2)-alpha-D-Man-(1-&gt;6)]-alpha-D-Man-(1-&gt;6)]-beta-D-Man-(1-&gt;4)-beta-D-GlcNAc-(1-&gt;4)-beta-D-GlcNAc)-L-asparaginyl-[protein] (N-glucan mannose isomer 9A1,2,3B1,2,3) + 4 H2O = N(4)-(alpha-D-Man-(1-&gt;3)-[alpha-D-Man-(1-&gt;3)-[alpha-D-Man-(1-&gt;6)]-alpha-D-Man-(1-&gt;6)]-beta-D-Man-(1-&gt;4)-beta-D-GlcNAc-(1-&gt;4)-beta-D-GlcNAc)-L-asparaginyl-[protein] (N-glucan mannose isomer 5A1,2) + 4 beta-D-mannose. It catalyses the reaction N(4)-(alpha-D-Man-(1-&gt;2)-alpha-D-Man-(1-&gt;2)-alpha-D-Man-(1-&gt;3)-[alpha-D-Man-(1-&gt;3)-[alpha-D-Man-(1-&gt;2)-alpha-D-Man-(1-&gt;6)]-alpha-D-Man-(1-&gt;6)]-beta-D-Man-(1-&gt;4)-beta-D-GlcNAc-(1-&gt;4)-beta-D-GlcNAc)-L-asparaginyl-[protein] (N-glucan mannose isomer 8A1,2,3B1,3) + 3 H2O = N(4)-(alpha-D-Man-(1-&gt;3)-[alpha-D-Man-(1-&gt;3)-[alpha-D-Man-(1-&gt;6)]-alpha-D-Man-(1-&gt;6)]-beta-D-Man-(1-&gt;4)-beta-D-GlcNAc-(1-&gt;4)-beta-D-GlcNAc)-L-asparaginyl-[protein] (N-glucan mannose isomer 5A1,2) + 3 beta-D-mannose. It functions in the pathway protein modification; protein glycosylation. Functionally, involved in endoplasmic reticulum-associated degradation (ERAD). Accelerates the glycoprotein ERAD by proteasomes, by catalyzing mannose trimming from Man8GlcNAc2 to Man7GlcNAc2 in the N-glycans. May also participate in mannose trimming from all glycoproteins and not just misfolded ones targeted to ERAD. May have alpha 1,2-mannosidase activity. In Homo sapiens (Human), this protein is ER degradation-enhancing alpha-mannosidase-like protein 3 (EDEM3).